The chain runs to 251 residues: Enolase-phosphatase E1 (251 aa).

Aspartate 13 and glutamate 15 together coordinate Mg(2+). Residues 137–138 (SS) and lysine 183 contribute to the substrate site. Aspartate 210 contributes to the Mg(2+) binding site.

Belongs to the HAD-like hydrolase superfamily. MasA/MtnC family. In terms of assembly, monomer. It depends on Mg(2+) as a cofactor.

It localises to the cytoplasm. The protein localises to the nucleus. It carries out the reaction 5-methylsulfanyl-2,3-dioxopentyl phosphate + H2O = 1,2-dihydroxy-5-(methylsulfanyl)pent-1-en-3-one + phosphate. Its pathway is amino-acid biosynthesis; L-methionine biosynthesis via salvage pathway; L-methionine from S-methyl-5-thio-alpha-D-ribose 1-phosphate: step 3/6. The protein operates within amino-acid biosynthesis; L-methionine biosynthesis via salvage pathway; L-methionine from S-methyl-5-thio-alpha-D-ribose 1-phosphate: step 4/6. Bifunctional enzyme that catalyzes the enolization of 2,3-diketo-5-methylthiopentyl-1-phosphate (DK-MTP-1-P) into the intermediate 2-hydroxy-3-keto-5-methylthiopentenyl-1-phosphate (HK-MTPenyl-1-P), which is then dephosphorylated to form the acireductone 1,2-dihydroxy-3-keto-5-methylthiopentene (DHK-MTPene). This is Enolase-phosphatase E1 from Candida glabrata (strain ATCC 2001 / BCRC 20586 / JCM 3761 / NBRC 0622 / NRRL Y-65 / CBS 138) (Yeast).